The primary structure comprises 205 residues: Small ribosomal subunit protein uS3c (205 aa).

In terms of domain architecture, KH type-2 spans 37–106; that stretch reads IRQLLRDYVL…TWRISLVEVS (70 aa).

The protein belongs to the universal ribosomal protein uS3 family. As to quaternary structure, part of the 30S ribosomal subunit.

The protein localises to the plastid. The protein resides in the chloroplast. The polypeptide is Small ribosomal subunit protein uS3c (rps3) (Cyanidioschyzon merolae (strain NIES-3377 / 10D) (Unicellular red alga)).